Reading from the N-terminus, the 220-residue chain is Flavin-dependent thymidylate synthase (220 aa).

Positions 1–208 constitute a ThyX domain; sequence MKIDILDKGF…PWTFEAFLKY (208 aa). FAD is bound by residues Thr55, 78 to 81, and Glu86; that span reads RHRI. Residues 75-78, 86-90, and Arg147 contribute to the dUMP site; these read QWFR and ELSGR. The ThyX motif signature appears at 78-88; sequence RHRIASYNELS. FAD contacts are provided by residues 163-165 and Asn169; that span reads NAR. Arg174 provides a ligand contact to dUMP. Arg174 (involved in ionization of N3 of dUMP, leading to its activation) is an active-site residue.

The protein belongs to the thymidylate synthase ThyX family. Homotetramer. The cofactor is FAD.

The catalysed reaction is dUMP + (6R)-5,10-methylene-5,6,7,8-tetrahydrofolate + NADPH + H(+) = dTMP + (6S)-5,6,7,8-tetrahydrofolate + NADP(+). The enzyme catalyses dUMP + formaldehyde + NADPH + H(+) = dTMP + NADP(+) + H2O. It functions in the pathway pyrimidine metabolism; dTTP biosynthesis. In terms of biological role, catalyzes the reductive methylation of 2'-deoxyuridine-5'-monophosphate (dUMP or deoxyuridylate) to 2'-deoxythymidine-5'-monophosphate (dTMP or deoxythymidylate) while utilizing 5,10-methylenetetrahydrofolate (mTHF) as the methylene donor, and NAD(P)H and FADH(2) as the reductant. This reaction is a critical step in DNA biosynthesis. Can also use formaldehyde instead of mTHF as a direct methylene donor for dTMP synthesis. However, the tighter binding of ThyX to mTHF (KD of 4 uM) compared to formaldehyde (KD of 20 mM) confirms that methylene tetrahydrofolate acts as the biological carbon donor for ThyX, serving as a formaldehyde carrier/transporter and thus avoiding genotoxic effects. In Thermotoga maritima (strain ATCC 43589 / DSM 3109 / JCM 10099 / NBRC 100826 / MSB8), this protein is Flavin-dependent thymidylate synthase.